The sequence spans 107 residues: Acetyl-CoA acetyltransferase (107 aa).

C88 acts as the Acyl-thioester intermediate in catalysis.

The protein belongs to the thiolase-like superfamily. Thiolase family. As to quaternary structure, homotetramer.

It localises to the cytoplasm. It carries out the reaction 2 acetyl-CoA = acetoacetyl-CoA + CoA. Catalyzes the condensation of two molecules of acetyl-CoA to produce acetoacetyl-CoA. This is Acetyl-CoA acetyltransferase (thi) from Clostridioides difficile (Peptoclostridium difficile).